The chain runs to 206 residues: Uridine kinase (206 aa).

11-18 (GGSASGKT) is a binding site for ATP.

It belongs to the uridine kinase family.

It localises to the cytoplasm. It carries out the reaction uridine + ATP = UMP + ADP + H(+). The enzyme catalyses cytidine + ATP = CMP + ADP + H(+). The protein operates within pyrimidine metabolism; CTP biosynthesis via salvage pathway; CTP from cytidine: step 1/3. It participates in pyrimidine metabolism; UMP biosynthesis via salvage pathway; UMP from uridine: step 1/1. In Lactococcus lactis subsp. lactis (strain IL1403) (Streptococcus lactis), this protein is Uridine kinase.